We begin with the raw amino-acid sequence, 210 residues long: Redox-sensing transcriptional repressor Rex (210 aa).

A DNA-binding region (H-T-H motif) is located at residues 16-55 (IYMRTLQELLEDDVDVISSERLAKQCGVNPAQIRKDLAYF). Position 90–95 (90–95 (GLGNLG)) interacts with NAD(+).

This sequence belongs to the transcriptional regulatory Rex family. Homodimer.

The protein resides in the cytoplasm. Modulates transcription in response to changes in cellular NADH/NAD(+) redox state. The polypeptide is Redox-sensing transcriptional repressor Rex (Syntrophobacter fumaroxidans (strain DSM 10017 / MPOB)).